Here is a 290-residue protein sequence, read N- to C-terminus: Syntaxin-2 (290 aa).

Over Met-1–Lys-266 the chain is Cytoplasmic. Ser-14 is subject to Phosphoserine. Residues Glu-69–Asn-106 are a coiled coil. Residues Leu-193 to Ala-255 enclose the t-SNARE coiled-coil homology domain. Residues Trp-267–Lys-290 traverse the membrane as a helical; Anchor for type IV membrane protein segment.

This sequence belongs to the syntaxin family. In terms of assembly, interacts with SYT6 and SYT8; the interaction is Ca(2+)-dependent. As to expression, heart, spleen, liver, and testis.

The protein resides in the membrane. In terms of biological role, essential for epithelial morphogenesis. May mediate Ca(2+)-regulation of exocytosis acrosomal reaction in sperm. This is Syntaxin-2 (Stx2) from Rattus norvegicus (Rat).